The following is a 1226-amino-acid chain: Methionine synthase (1226 aa).

Residues 6-326 (RAQIEAQLKQ…EHIRHMAMAV (321 aa)) enclose the Hcy-binding domain. Residues Cys248, Cys311, and Cys312 each contribute to the Zn(2+) site. The region spanning 357-618 (FVNVGERTNV…VPEKLREAVE (262 aa)) is the Pterin-binding domain. One can recognise a B12-binding N-terminal domain in the interval 651–745 (SALEWRTWSV…FINASKQAGS (95 aa)). Methylcob(III)alamin contacts are provided by residues Glu695, 757-761 (GDVHD), His760, Ser805, Thr809, and Ala861. Positions 747–882 (NGKILLATVK…SDELRPAFVE (136 aa)) constitute a B12-binding domain. An AdoMet activation domain is found at 898-1226 (KKPRTKPVTL…EKWLGPNING (329 aa)). Residues Asp948, Arg1136, and 1191-1192 (YF) each bind S-adenosyl-L-methionine.

Belongs to the vitamin-B12 dependent methionine synthase family. The cofactor is methylcob(III)alamin. Zn(2+) serves as cofactor.

The enzyme catalyses (6S)-5-methyl-5,6,7,8-tetrahydrofolate + L-homocysteine = (6S)-5,6,7,8-tetrahydrofolate + L-methionine. Its pathway is amino-acid biosynthesis; L-methionine biosynthesis via de novo pathway; L-methionine from L-homocysteine (MetH route): step 1/1. Its function is as follows. Catalyzes the transfer of a methyl group from methyl-cobalamin to homocysteine, yielding enzyme-bound cob(I)alamin and methionine. Subsequently, remethylates the cofactor using methyltetrahydrofolate. This is Methionine synthase (metH) from Vibrio vulnificus (strain CMCP6).